A 280-amino-acid polypeptide reads, in one-letter code: Dermonecrotic toxin LgSicTox-alphaIC1 (280 aa).

His-12 is an active-site residue. 2 residues coordinate Mg(2+): Glu-32 and Asp-34. The Nucleophile role is filled by His-48. 2 disulfide bridges follow: Cys-52/Cys-58 and Cys-54/Cys-197. Mg(2+) is bound at residue Asp-92.

This sequence belongs to the arthropod phospholipase D family. Class II subfamily. Requires Mg(2+) as cofactor. Expressed by the venom gland.

It is found in the secreted. The enzyme catalyses an N-(acyl)-sphingosylphosphocholine = an N-(acyl)-sphingosyl-1,3-cyclic phosphate + choline. The catalysed reaction is an N-(acyl)-sphingosylphosphoethanolamine = an N-(acyl)-sphingosyl-1,3-cyclic phosphate + ethanolamine. It catalyses the reaction a 1-acyl-sn-glycero-3-phosphocholine = a 1-acyl-sn-glycero-2,3-cyclic phosphate + choline. It carries out the reaction a 1-acyl-sn-glycero-3-phosphoethanolamine = a 1-acyl-sn-glycero-2,3-cyclic phosphate + ethanolamine. In terms of biological role, dermonecrotic toxins cleave the phosphodiester linkage between the phosphate and headgroup of certain phospholipids (sphingolipid and lysolipid substrates), forming an alcohol (often choline) and a cyclic phosphate. This toxin acts on sphingomyelin (SM) with high activity. It may also act on ceramide phosphoethanolamine (CPE), lysophosphatidylcholine (LPC) and lysophosphatidylethanolamine (LPE), but not on lysophosphatidylserine (LPS), and lysophosphatidylglycerol (LPG). It acts by transphosphatidylation, releasing exclusively cyclic phosphate products as second products. Induces platelet aggregation in platelet rich plasma, but not in washed platelet, indicating that this activity is dependent on plasma components. Also induces hemolysis. In vivo, the recombinant protein evokes an intense inflammatory reaction and dermonecrosis, similar to those induced by L.gaucho total venom. Is a good immunogen, capable of inducing immunoprotection in test animals. Anionic antimicrobial peptide that shows antimicrobial activity against Gram-negative bacteria (MIC=1.15-4.6 uM) (tested on E.coli, P.aeruginosa, and E.cloacae), but not on Gram-negative bacteria (M.luteus, S.aureus, and B.subtilis), neither on fungi and yeasts (A.niger, C.albicans and C.krusei). Does not show hemolytic effects against human erythrocytes, and has no cytotoxic effects against human cervical carcinoma cells (HeLa). The sequence is that of Dermonecrotic toxin LgSicTox-alphaIC1 from Loxosceles gaucho (Spider).